A 596-amino-acid chain; its full sequence is Elongation factor 4 (596 aa).

The 183-residue stretch at 2 to 184 folds into the tr-type G domain; that stretch reads KHIRNFSIIA…VIVAQIPPPE (183 aa). GTP contacts are provided by residues 14–19 and 131–134; these read DHGKST and NKID.

This sequence belongs to the TRAFAC class translation factor GTPase superfamily. Classic translation factor GTPase family. LepA subfamily.

It localises to the cell inner membrane. It carries out the reaction GTP + H2O = GDP + phosphate + H(+). Required for accurate and efficient protein synthesis under certain stress conditions. May act as a fidelity factor of the translation reaction, by catalyzing a one-codon backward translocation of tRNAs on improperly translocated ribosomes. Back-translocation proceeds from a post-translocation (POST) complex to a pre-translocation (PRE) complex, thus giving elongation factor G a second chance to translocate the tRNAs correctly. Binds to ribosomes in a GTP-dependent manner. This is Elongation factor 4 from Shewanella woodyi (strain ATCC 51908 / MS32).